The primary structure comprises 374 residues: Putative clathrin assembly protein At1g33340 (374 aa).

The ENTH domain occupies 30–163 (YNEKAFFDIE…GWIINQAGKL (134 aa)).

It is found in the membrane. The protein localises to the clathrin-coated pit. Its subcellular location is the golgi apparatus. It localises to the cytoplasmic vesicle. The protein resides in the clathrin-coated vesicle. The sequence is that of Putative clathrin assembly protein At1g33340 from Arabidopsis thaliana (Mouse-ear cress).